We begin with the raw amino-acid sequence, 213 residues long: Proteasome subunit beta (213 aa).

A propeptide spans 1–11 (MPEQYQESMTG) (removed in mature form; by autocatalysis). Threonine 12 functions as the Nucleophile in the catalytic mechanism.

Belongs to the peptidase T1B family. As to quaternary structure, the 20S proteasome core is composed of 14 alpha and 14 beta subunits that assemble into four stacked heptameric rings, resulting in a barrel-shaped structure. The two inner rings, each composed of seven catalytic beta subunits, are sandwiched by two outer rings, each composed of seven alpha subunits. The catalytic chamber with the active sites is on the inside of the barrel. Has a gated structure, the ends of the cylinder being occluded by the N-termini of the alpha-subunits. Is capped at one or both ends by the proteasome regulatory ATPase, PAN.

The protein resides in the cytoplasm. It catalyses the reaction Cleavage of peptide bonds with very broad specificity.. Its activity is regulated as follows. The formation of the proteasomal ATPase PAN-20S proteasome complex, via the docking of the C-termini of PAN into the intersubunit pockets in the alpha-rings, triggers opening of the gate for substrate entry. Interconversion between the open-gate and close-gate conformations leads to a dynamic regulation of the 20S proteasome proteolysis activity. Its function is as follows. Component of the proteasome core, a large protease complex with broad specificity involved in protein degradation. This chain is Proteasome subunit beta, found in Methanoregula boonei (strain DSM 21154 / JCM 14090 / 6A8).